Consider the following 329-residue polypeptide: GTPase Obg (329 aa).

The Obg domain occupies 1–159; the sequence is MQFIDQARIT…WLLHLELKLL (159 aa). Residues 160-328 enclose the OBG-type G domain; that stretch reads AEVGIIGLPN…LLNKIWSKLE (169 aa). Residues 166-173, 191-195, 213-216, 280-283, and 309-311 each bind ATP; these read GLPNAGKS, FTTLI, DIPG, NKKE, and SAI. Mg(2+) contacts are provided by Ser-173 and Thr-193.

The protein belongs to the TRAFAC class OBG-HflX-like GTPase superfamily. OBG GTPase family. Monomer. Requires Mg(2+) as cofactor.

It localises to the cytoplasm. An essential GTPase which binds GTP, GDP and possibly (p)ppGpp with moderate affinity, with high nucleotide exchange rates and a fairly low GTP hydrolysis rate. Plays a role in control of the cell cycle, stress response, ribosome biogenesis and in those bacteria that undergo differentiation, in morphogenesis control. The polypeptide is GTPase Obg (Prochlorococcus marinus (strain SARG / CCMP1375 / SS120)).